The chain runs to 152 residues: uncharacterized protein (152 aa).

Topologically, residues 1–5 are cytoplasmic; that stretch reads MWFPQ. The helical transmembrane segment at 6-26 threads the bilayer; sequence IIAGMAAGGAASAMTPGKVLF. Topologically, residues 27-38 are extracellular; it reads TNALGLGCSRSR. Residues 39 to 59 form a helical membrane-spanning segment; sequence GLFLEMFGTAVLCLTVLMTAV. At 60-65 the chain is on the cytoplasmic side; that stretch reads EKRETN. Residues 66–86 form a helical membrane-spanning segment; sequence FMAALPIGISLFMAHMALTGY. At 87–110 the chain is on the extracellular side; the sequence is TGTGVNPARSLGAAVAARYFPHYH. The NPA motif lies at 92 to 94; sequence NPA. The chain crosses the membrane as a helical span at residues 111-131; that stretch reads WIYWISPLLGAFLAWSVWQLL. At 132-152 the chain is on the cytoplasmic side; that stretch reads QILDYTTYVNAEKAAGQKKED.

It belongs to the MIP/aquaporin (TC 1.A.8) family.

The protein localises to the membrane. This is an uncharacterized protein from Saccharomyces cerevisiae (strain RM11-1a) (Baker's yeast).